We begin with the raw amino-acid sequence, 44 residues long: Phosphatase RapA inhibitor (44 aa).

A propeptide spanning residues 1–39 is cleaved from the precursor; that stretch reads MKSKWMSGLLLVAVGFSFTQVMVHAGETANTEGKTFHIA.

Belongs to the Phr family. As to quaternary structure, interacts with RapA and inhibits its interaction with Spo0F. Post-translationally, secreted with a propeptide domain, which is cleaved in the cell wall by the secreted serine proteases subtilisin and Vpr to produce a mature signaling peptide. Contains a predicted signal peptide cleavage site in the N-terminal region, however the propeptide is probably subject to only one processing event, at the N-terminal end of the mature peptide.

The protein localises to the secreted. The protein resides in the cytoplasm. Its activity is regulated as follows. Inhibition of RapA requires a free carboxylate group at the C-terminal end of the PhrA pentapeptide. A free C-terminal carboxylic acid PhrA pentapeptide inhibits RapA phosphatase activity at a 1:1 ratio and is approximately 200 fold more active than a C-terminal amide peptide. Its function is as follows. Signaling molecule involved in the regulation of sporulation. Secreted during production, but the mature peptide acts intracellularly, indicating that it needs to be imported into the cell to function. Inhibitor of the RapA phosphatase activity. Does not act on RapB. The protein is Phosphatase RapA inhibitor of Bacillus subtilis (strain 168).